Reading from the N-terminus, the 156-residue chain is Small ribosomal subunit protein uS7 (156 aa).

The protein belongs to the universal ribosomal protein uS7 family. Part of the 30S ribosomal subunit. Contacts proteins S9 and S11.

One of the primary rRNA binding proteins, it binds directly to 16S rRNA where it nucleates assembly of the head domain of the 30S subunit. Is located at the subunit interface close to the decoding center, probably blocks exit of the E-site tRNA. The sequence is that of Small ribosomal subunit protein uS7 from Streptococcus pneumoniae serotype 4 (strain ATCC BAA-334 / TIGR4).